The following is a 484-amino-acid chain: Probable endopeptidase p60 (484 aa).

A signal peptide spans 1-27; that stretch reads MNMKKATIAATAGIAVTAFAAPTIASA. The 44-residue stretch at 28–71 folds into the LysM 1 domain; that stretch reads STVVVEAGDTLWGIAQSKGTTVDAIKKANNLTTDKIVPGQKLQV. One can recognise an SH3b domain in the interval 80–144; the sequence is KTEKSVSATW…VNGKYLTDKA (65 aa). A disordered region spans residues 150 to 192; the sequence is APTQEVKKETTTQQAAPAAETKTEVKQTTQATTPAPKVAETKE. Low complexity predominate over residues 160–169; that stretch reads TTQQAAPAAE. The LysM 2 domain occupies 201–244; it reads TTHAVKSGDTIWALSVKYGVSVQDIMSWNNLSSSSIYVGQKLAI. The disordered stretch occupies residues 254–367; the sequence is KAEVKTEAPA…QGSSNNNSNS (114 aa). Low complexity-rich tracts occupy residues 273-282 and 289-367; these read KENTNTNTAT and ATQQ…NSNS. Positions 311 to 355 are 19 X 2 AA tandem repeats of T-N; the sequence is TNTNANKTNTNTNTNTNTNNTNTNTPSKNTNTNSNTNTNTNSNTN. A NlpC/P60 domain is found at 366–484; that stretch reads NSSASAIIAE…GKYLVGFGRV (119 aa). The active-site Nucleophile is the cysteine 396. Histidine 446 functions as the Proton acceptor in the catalytic mechanism. Asparagine 458 is an active-site residue.

The protein belongs to the peptidase C40 family.

Its subcellular location is the cell surface. The protein resides in the secreted. This major extracellular protein may be involved in the invasion of non-professional phagocytic cells by Listeria. The chain is Probable endopeptidase p60 (iap) from Listeria monocytogenes serovar 1/2a (strain ATCC BAA-679 / EGD-e).